The chain runs to 462 residues: Tryptophan dimethylallyltransferase ifgA (462 aa).

Residues 83–84 and glutamate 92 contribute to the L-tryptophan site; that span reads IL. Residues arginine 103, lysine 189, and tyrosine 191 each contribute to the substrate site. Tyrosine 193 and arginine 246 together coordinate L-tryptophan. Residues arginine 259, lysine 261, tyrosine 263, glutamine 345, and tyrosine 347 each coordinate substrate.

It belongs to the tryptophan dimethylallyltransferase family. Homodimer.

The enzyme catalyses L-tryptophan + dimethylallyl diphosphate = 4-(3-methylbut-2-enyl)-L-tryptophan + diphosphate. Its pathway is alkaloid biosynthesis; ergot alkaloid biosynthesis. Tryptophan dimethylallyltransferase; part of the gene cluster that mediates the biosynthesis of isofumigaclavines, fungal ergot alkaloids. The tryptophan dimethylallyltransferase ifgA catalyzes the first step of ergot alkaloid biosynthesis by condensing dimethylallyl diphosphate (DMAP) and tryptophan to form 4-dimethylallyl-L-tryptophan. The second step is catalyzed by the methyltransferase ifgB that methylates 4-dimethylallyl-L-tryptophan in the presence of S-adenosyl-L-methionine, resulting in the formation of N-methyl-dimethylallyl-L-tryptophan. The catalase ifgD and the FAD-dependent oxidoreductase ifgC then transform N-methyl-dimethylallyl-L-tryptophan to chanoclavine-I which is further oxidized by ifgE in the presence of NAD(+), resulting in the formation of chanoclavine-I aldehyde. The chanoclavine-I aldehyde reductases ifgG and/or fgaOx3 reduce chanoclavine-I aldehyde to dihydrochanoclavine-I aldehyde that spontaneously dehydrates to form 6,8-dimethyl-6,7-didehydroergoline. The festuclavine dehydrogenases ifgF1 and/or ifgF2 then catalyze the reduction of 6,8-dimethyl-6,7-didehydroergoline to form festuclavine. Hydrolysis of festuclavine by a yet undetermined cytochrome P450 monooxygenase (called ifgH) then leads to the formation of isofumigaclavine B which is in turn acetylated by ifgI to isofumigaclavine A. Penicillium roqueforti has interestingly at least two sets of genes for the consumption of chanoclavine-I aldehyde on three different loci, the OYEs ifgG/fgaOx3 and the festuclavine synthase homologs ifgF1/ifgF2. The reason for the duplication of these genes is unclear, probably to ensure the conversion of chanoclavine-I aldehyde by differential gene expression under various environmental conditions. In Penicillium roqueforti (strain FM164), this protein is Tryptophan dimethylallyltransferase ifgA.